The chain runs to 496 residues: Steroid 21-hydroxylase (496 aa).

Ser-109 is a binding site for heme b. Arg-232 lines the 17alpha-hydroxyprogesterone pocket. Position 232 (Arg-232) interacts with progesterone. Positions 364, 425, and 427 each coordinate heme b.

Belongs to the cytochrome P450 family. It depends on heme b as a cofactor.

The protein resides in the endoplasmic reticulum membrane. Its subcellular location is the microsome membrane. It catalyses the reaction progesterone + reduced [NADPH--hemoprotein reductase] + O2 = 21-hydroxyprogesterone + oxidized [NADPH--hemoprotein reductase] + H2O + H(+). The catalysed reaction is 17alpha-hydroxyprogesterone + reduced [NADPH--hemoprotein reductase] + O2 = 11-deoxycortisol + oxidized [NADPH--hemoprotein reductase] + H2O + H(+). Functionally, a cytochrome P450 monooxygenase that plays a major role in adrenal steroidogenesis. Catalyzes the hydroxylation at C-21 of progesterone and 17alpha-hydroxyprogesterone to respectively form 11-deoxycorticosterone and 11-deoxycortisol, intermediate metabolites in the biosynthetic pathway of mineralocorticoids and glucocorticoids. Mechanistically, uses molecular oxygen inserting one oxygen atom into a substrate, and reducing the second into a water molecule, with two electrons provided by NADPH via cytochrome P450 reductase (CPR; NADPH-ferrihemoprotein reductase). The sequence is that of Steroid 21-hydroxylase (CYP21) from Bos taurus (Bovine).